The chain runs to 40 residues: Natriuretic peptide HsNP-b (40 aa).

Residues 1–8 (SGSKTAKI) constitute a propeptide that is removed on maturation. The interval 1–40 (SGSKTAKIGDGCFGVPIDHIGSTTDLGCGRPRPKPTPRGS) is disordered. Cys-12 and Cys-28 are disulfide-bonded. Over residues 31 to 40 (PRPKPTPRGS) the composition is skewed to basic residues.

This sequence belongs to the natriuretic peptide family. In terms of tissue distribution, expressed by the venom gland.

The protein localises to the secreted. Functionally, snake venom natriuretic peptide that targets both NPR1 and NPR2. Exhibits hypotensive and vasodepressor activities. This chain is Natriuretic peptide HsNP-b, found in Hoplocephalus stephensii (Stephens's banded snake).